The chain runs to 222 residues: Deoxyribose-phosphate aldolase (222 aa).

Aspartate 94 serves as the catalytic Proton donor/acceptor. Lysine 156 serves as the catalytic Schiff-base intermediate with acetaldehyde. Lysine 185 (proton donor/acceptor) is an active-site residue.

It belongs to the DeoC/FbaB aldolase family. DeoC type 1 subfamily.

Its subcellular location is the cytoplasm. It catalyses the reaction 2-deoxy-D-ribose 5-phosphate = D-glyceraldehyde 3-phosphate + acetaldehyde. Its pathway is carbohydrate degradation; 2-deoxy-D-ribose 1-phosphate degradation; D-glyceraldehyde 3-phosphate and acetaldehyde from 2-deoxy-alpha-D-ribose 1-phosphate: step 2/2. Catalyzes a reversible aldol reaction between acetaldehyde and D-glyceraldehyde 3-phosphate to generate 2-deoxy-D-ribose 5-phosphate. In Malacoplasma penetrans (strain HF-2) (Mycoplasma penetrans), this protein is Deoxyribose-phosphate aldolase.